Here is a 1850-residue protein sequence, read N- to C-terminus: Voltage-dependent L-type calcium channel subunit alpha-1S (1850 aa).

Residues 1-23 are disordered; sequence MEPSSPQDEGLRKKQPKKPVPEI. Residues 1 to 51 are Cytoplasmic-facing; that stretch reads MEPSSPQDEGLRKKQPKKPVPEILPRPPRALFCLTLQNPLRKACISVVEWK. Residues 38-337 form an I repeat; sequence NPLRKACISV…LVLGVLSGEF (300 aa). The helical transmembrane segment at 52 to 70 threads the bilayer; that stretch reads PFETIILLTIFANCVALAV. Over 71 to 85 the chain is Extracellular; the sequence is YLPMPEDDNNTLNLG. Residues 86-106 form a helical membrane-spanning segment; sequence LEKLEYFFLIVFSIEAAMKII. The Cytoplasmic segment spans residues 107 to 115; that stretch reads AYGFLFHQD. The chain crosses the membrane as a helical span at residues 116-136; the sequence is AYLRSGWNVLDFIIVFLGVFT. The Extracellular segment spans residues 137–160; sequence AILEQVNIIQTNTAPMSSKGAGLD. A helical transmembrane segment spans residues 161-179; that stretch reads VKALRAFRVLRPLRLVSGV. The Cytoplasmic portion of the chain corresponds to 180–196; the sequence is PSLQVVLNSIFKAMLPL. Residues 197–218 form a helical membrane-spanning segment; the sequence is FHIALLVLFMVIIYAIIGLELF. The Extracellular portion of the chain corresponds to 219 to 279; that stretch reads KGKMHKTCYF…HGITHFDNFG (61 aa). 2 cysteine pairs are disulfide-bonded: Cys226–Cys254 and Cys245–Cys261. Residues 280 to 301 constitute an intramembrane region (pore-forming); it reads FSMLTVYQCISMEGWTDVLYWV. The Selectivity filter of repeat I signature appears at 290–293; the sequence is SMEG. Glu292 is a binding site for Ca(2+). Residues 302 to 309 are Extracellular-facing; the sequence is NDAIGNEW. Residues 310 to 330 traverse the membrane as a helical segment; that stretch reads PWIYFVTLILLGSFFILNLVL. At 331–432 the chain is on the cytoplasmic side; sequence GVLSGEFTKE…WKCHDLVKSK (102 aa). Residues 357–374 are binding to the beta subunit; sequence QQLEEDLRGYMSWITQGE. A phosphoserine mark is found at Ser393 and Ser397. The stretch at 418–664 is one II repeat; the sequence is NRVFRWKCHD…VFLAIAVDNL (247 aa). A helical membrane pass occupies residues 433 to 451; sequence VFYWLVILIVALNTLSIAS. The Extracellular portion of the chain corresponds to 452–462; sequence EHHNQPLWLTH. Residues 463–483 traverse the membrane as a helical segment; that stretch reads LQDVANRVLLALFTIEMLMKM. The Cytoplasmic segment spans residues 484-494; it reads YGLGLRQYFMS. The helical transmembrane segment at 495 to 514 threads the bilayer; sequence IFNRFDCFVVCSGILEILLV. Residues 515 to 523 lie on the Extracellular side of the membrane; that stretch reads ESGAMTPLG. A helical membrane pass occupies residues 524–542; that stretch reads ISVLRCIRLLRLFKITKYW. The Cytoplasmic segment spans residues 543–561; the sequence is TSLSNLVASLLNSIRSIAS. Residues 562–581 form a helical membrane-spanning segment; that stretch reads LLLLLFLFMIIFALLGMQLF. Residues 582 to 601 are Extracellular-facing; that stretch reads GGRYDFEDTEVRRSNFDNFP. The pore-forming intramembrane region spans 602–623; sequence QALISVFQVLTGEDWNSVMYNG. The Selectivity filter of repeat II motif lies at 612–615; the sequence is TGED. Glu614 provides a ligand contact to Ca(2+). At 624-633 the chain is on the extracellular side; it reads IMAYGGPSYP. A helical membrane pass occupies residues 634 to 653; it reads GVLVCIYFIILFVCGNYILL. At 654–799 the chain is on the cytoplasmic side; that stretch reads NVFLAIAVDN…VLCHRIVNAT (146 aa). Disordered regions lie at residues 673 to 717 and 731 to 758; these read AQKA…IPTT and EVKD…SPRP. Residue Ser687 is modified to Phosphoserine; by PKA. The segment covering 690–711 has biased composition (basic and acidic residues); sequence LPDKSEEERSTMTKKLEQKPKG. Over residues 742-751 the composition is skewed to acidic residues; that stretch reads PGDDEEDEPE. An III repeat occupies 786–1068; that stretch reads NKIRVLCHRI…IFVGFVIVTF (283 aa). The helical transmembrane segment at 800 to 818 threads the bilayer; the sequence is WFTNFILLFILLSSAALAA. Residues 819–830 lie on the Extracellular side of the membrane; the sequence is EDPIRADSMRNQ. The helical transmembrane segment at 831–850 threads the bilayer; the sequence is ILEYFDYVFTAVFTVEIVLK. Residues 851–866 are Cytoplasmic-facing; the sequence is MTTYGAFLHKGSFCRN. The chain crosses the membrane as a helical span at residues 867–885; that stretch reads YFNILDLLVVAVSLISMGL. The Extracellular portion of the chain corresponds to 886–892; the sequence is ESSAISV. Residues 893–911 traverse the membrane as a helical segment; sequence VKILRVLRVLRPLRAINRA. At 912 to 930 the chain is on the cytoplasmic side; it reads KGLKHVVQCVFVAIRTIGN. Residues 931–950 form a helical membrane-spanning segment; that stretch reads IVLVTTLLQFMFACIGVQLF. The Extracellular segment spans residues 951–1000; it reads KGKFYSCNDLSKMTEEECRGYYYIYKDGDPTQIELRPRQWIHNDFHFDNV. Cys957 and Cys968 are oxidised to a cystine. Residues 988-1077 form a dihydropyridine binding region; sequence RQWIHNDFHF…FQEQGETEYK (90 aa). The segment at residues 1001 to 1021 is an intramembrane region (pore-forming); sequence LSAMMSLFTVSTFEGWPQLLY. The short motif at 1012–1015 is the Selectivity filter of repeat III element; the sequence is TFEG. Position 1014 (Glu1014) interacts with Ca(2+). Over 1022–1038 the chain is Extracellular; sequence KAIDSNEEDTGPVYNNR. The helical transmembrane segment at 1039 to 1060 threads the bilayer; the sequence is VEMAIFFIIYIILIAFFMMNIF. The Cytoplasmic segment spans residues 1061–1118; the sequence is VGFVIVTFQEQGETEYKNCELDKNQRQCVQYALKARPLRCYIPKNPYQYQVWYVVTSS. The IV repeat unit spans residues 1105–1384; sequence NPYQYQVWYV…LFVAVIMDNF (280 aa). Residues 1119-1140 form a helical membrane-spanning segment; the sequence is YFEYLMFALIMLNTICLGMQHY. An N-linked (GlcNAc...) asparagine glycan is attached at Asn1141. Over 1141 to 1148 the chain is Extracellular; the sequence is NQSEQMNH. A helical transmembrane segment spans residues 1149-1170; that stretch reads ISDILNVAFTIIFTLEMILKLI. At 1171 to 1180 the chain is on the cytoplasmic side; the sequence is AFKPRGYFGD. Residues 1181 to 1200 traverse the membrane as a helical segment; the sequence is PWNVFDFLIVIGSIIDVILS. The Extracellular portion of the chain corresponds to 1201-1231; sequence EIDTLLASSGGLYCLGGGCGNVDPDESARIS. A helical membrane pass occupies residues 1232 to 1250; sequence SAFFRLFRVMRLIKLLSRA. Residues 1251-1268 are Cytoplasmic-facing; that stretch reads EGVRTLLWTFIKSFQALP. The helical transmembrane segment at 1269 to 1289 threads the bilayer; it reads YVALLIVMLFFIYAVIGMQMF. Over 1290-1311 the chain is Extracellular; sequence GKIAMVDGTQINRNNNFQTFPQ. Residues 1312–1330 constitute an intramembrane region (pore-forming); that stretch reads AVLLLFRCATGEAWQEILL. The Selectivity filter of repeat IV motif lies at 1321–1324; it reads TGEA. Topologically, residues 1331 to 1356 are extracellular; sequence ACSYGKRCDPESDYAPGEEYACGTNF. A dihydropyridine binding region spans residues 1337-1403; sequence RCDPESDYAP…LGPHHLDEFK (67 aa). Cys1338 and Cys1352 form a disulfide bridge. The tract at residues 1349-1391 is phenylalkylamine binding; sequence EYACGTNFAYYYFISFYMLCAFLIINLFVAVIMDNFDYLTRDW. Residues 1357 to 1381 form a helical membrane-spanning segment; it reads AYYYFISFYMLCAFLIINLFVAVIM. Topologically, residues 1382–1850 are cytoplasmic; the sequence is DNFDYLTRDW…PKGGAMPREP (469 aa). Residues 1522–1542 are interaction with calmodulin; the sequence is KFYATFLIQEHFRKFMKRQEE. A Phosphoserine; by PKA and CAMK2 modification is found at Ser1575. At Thr1579 the chain carries Phosphothreonine. At Ser1617 the chain carries Phosphoserine; by PKA. The tract at residues 1697–1779 is disordered; the sequence is PVTREGPFSQ…FEERVPRNSA (83 aa). Positions 1706-1716 are enriched in polar residues; sequence QPCSVSGVNSR. Composition is skewed to basic and acidic residues over residues 1717 to 1726 and 1745 to 1756; these read SHVDKLERQM and QEKHPVHEEGKG.

The protein belongs to the calcium channel alpha-1 subunit (TC 1.A.1.11) family. CACNA1S subfamily. As to quaternary structure, component of a calcium channel complex consisting of a pore-forming alpha subunit (CACNA1S) and the ancillary subunits CACNB1 or CACNB2, CACNG1 and CACNA2D1. The channel complex contains alpha, beta, gamma and delta subunits in a 1:1:1:1 ratio, i.e. it contains either CACNB1 or CACNB2. CACNA1S channel activity is modulated by the auxiliary subunits (CACNB1 or CACNB2, CACNG1 and CACNA2D1). Interacts with DYSF and JSRP1. Interacts with RYR1. Interacts with STAC, STAC2 and STAC3 (via their SH3 domains). Interacts with CALM. In terms of processing, the alpha-1S subunit is found in two isoforms in the skeletal muscle: a minor form of 212 kDa containing the complete amino acid sequence, and a major form of 190 kDa derived from the full-length form by post-translational proteolysis close to Phe-1690. Post-translationally, phosphorylated. Phosphorylation by PKA activates the calcium channel. Both the minor and major forms are phosphorylated in vitro by PKA. Phosphorylation at Ser-1575 is involved in beta-adrenergic-mediated regulation of the channel. Skeletal muscle specific.

The protein resides in the cell membrane. The protein localises to the sarcolemma. It is found in the T-tubule. It catalyses the reaction Ca(2+)(in) = Ca(2+)(out). Channel activity is blocked by dihydropyridines (DHP), phenylalkylamines, and by benzothiazepines. In terms of biological role, pore-forming, alpha-1S subunit of the voltage-gated calcium channel that gives rise to L-type calcium currents in skeletal muscle. Calcium channels containing the alpha-1S subunit play an important role in excitation-contraction coupling in skeletal muscle via their interaction with RYR1, which triggers Ca(2+) release from the sarcplasmic reticulum and ultimately results in muscle contraction. Long-lasting (L-type) calcium channels belong to the 'high-voltage activated' (HVA) group. This is Voltage-dependent L-type calcium channel subunit alpha-1S (Cacna1s) from Rattus norvegicus (Rat).